We begin with the raw amino-acid sequence, 174 residues long: MKKQQRLVMRTVILLLLLAALGYTIYANFFTEKTAVAVGSTAPDFVLSDLEGREHRLTDYRGKGVFLNFWGTWCKPCEREMPYMNELYPIYQKQGVEILAVNVGEPKLNVEKFAERFGLTFPIVIDRQDQVLNAYGVGPLPTTFLIDKNGKVKKIITGTMTKEDIKQHLESIKP.

Residues 11-30 (TVILLLLLAALGYTIYANFF) form a helical; Signal-anchor for type II membrane protein membrane-spanning segment. The region spanning 36–174 (VAVGSTAPDF…IKQHLESIKP (139 aa)) is the Thioredoxin domain. C74 and C77 are disulfide-bonded.

It belongs to the thioredoxin family. ResA subfamily.

The protein localises to the cell membrane. It participates in protein modification; cytochrome c assembly. Thiol-disulfide oxidoreductase which is required in disulfide reduction during c-type cytochrome synthesis. May accept reducing equivalents from CcdA, leading to breakage of disulfide bonds in apocytochrome c; following this reduction heme can be covalently attached. The chain is Thiol-disulfide oxidoreductase ResA from Geobacillus thermodenitrificans (strain NG80-2).